The primary structure comprises 265 residues: Glutamate racemase (265 aa).

Residues 7 to 8 and 39 to 40 each bind substrate; these read DS and YG. Catalysis depends on C70, which acts as the Proton donor/acceptor. Residue 71-72 coordinates substrate; the sequence is NT. C177 (proton donor/acceptor) is an active-site residue.

It belongs to the aspartate/glutamate racemases family.

The catalysed reaction is L-glutamate = D-glutamate. It functions in the pathway cell wall biogenesis; peptidoglycan biosynthesis. Provides the (R)-glutamate required for cell wall biosynthesis. The sequence is that of Glutamate racemase from Prochlorococcus marinus (strain NATL1A).